The sequence spans 357 residues: Leucoanthocyanidin dioxygenase (357 aa).

One can recognise a Fe2OG dioxygenase domain in the interval leucine 212–proline 311. The Fe cation site is built by histidine 236, aspartate 238, and histidine 292.

Belongs to the iron/ascorbate-dependent oxidoreductase family. Requires Fe cation as cofactor. The cofactor is L-ascorbate.

The catalysed reaction is a (2R,3S,4S)-leucoanthocyanidin + 2-oxoglutarate + O2 = a 4-H-anthocyanidin with a 3-hydroxy group + succinate + CO2 + 2 H2O. Its pathway is pigment biosynthesis; anthocyanin biosynthesis. Oxidation of leucoanthocyanidins into anthocyanidins. The protein is Leucoanthocyanidin dioxygenase (ANS) of Malus domestica (Apple).